Here is a 485-residue protein sequence, read N- to C-terminus: UDP-N-acetylmuramate--L-alanine ligase (485 aa).

ATP is bound at residue 127–133 (GTHGKTT).

The protein belongs to the MurCDEF family.

The protein localises to the cytoplasm. The catalysed reaction is UDP-N-acetyl-alpha-D-muramate + L-alanine + ATP = UDP-N-acetyl-alpha-D-muramoyl-L-alanine + ADP + phosphate + H(+). It participates in cell wall biogenesis; peptidoglycan biosynthesis. Cell wall formation. The protein is UDP-N-acetylmuramate--L-alanine ligase of Shewanella frigidimarina (strain NCIMB 400).